Reading from the N-terminus, the 198-residue chain is Sulfite reductase, dissimilatory-type subunit alpha (198 aa).

4 residues coordinate [4Fe-4S] cluster: Cys-45, Cys-64, Cys-67, and Cys-70. Positions 55–83 (GTLSIDNKNCTRCMHCINTMPRALKIGDE) constitute a 4Fe-4S ferredoxin-type domain.

Heterohexamer of two alpha, two beta and two gamma subunits.

Its function is as follows. Part of the complex that catalyzes the reduction of sulfite to sulfide. The alpha and beta subunits may have arisen by gene duplication. They both bind 2 iron-sulfur clusters, but the alpha subunit seems to be catalytically inactive, due to substitutions along the putative substrate access channel, and because it binds sirohydrochlorin (the dematallated form of siroheme) instead of siroheme. The chain is Sulfite reductase, dissimilatory-type subunit alpha (dsrA) from Megalodesulfovibrio gigas (strain ATCC 19364 / DSM 1382 / NCIMB 9332 / VKM B-1759) (Desulfovibrio gigas).